Reading from the N-terminus, the 461-residue chain is Demethyllactenocin mycarosyltransferase (461 aa).

The tract at residues 1-21 (MAGLRPGAGVPPGTPWPISPG) is disordered.

Belongs to the UDP-glycosyltransferase family.

It catalyses the reaction dTDP-beta-L-mycarose + demethyllactenocin = demethylmacrocin + dTDP + H(+). Involved in the biosynthesis of mycarose which is a 6-deoxyhexose sugar required during production of the macrolide antibiotic tylosin. Catalyzes the transfer of L-mycarosyl from dTDP-beta-L-mycarose to demethyllactenocin to yield demethylmacrocin. The sequence is that of Demethyllactenocin mycarosyltransferase (tylCV) from Streptomyces fradiae (Streptomyces roseoflavus).